A 90-amino-acid polypeptide reads, in one-letter code: Inactive casein kinase II subunit alpha-2 (90 aa).

ATP is bound by residues 40-48 and K63; that span reads VGRGKYSEV.

The protein belongs to the protein kinase superfamily. Ser/Thr protein kinase family. CK2 subfamily.

The Nipponbare allele of HD6 contains a premature stop codon, resulting in a truncated non-functional product. The protein is Inactive casein kinase II subunit alpha-2 of Oryza sativa subsp. japonica (Rice).